We begin with the raw amino-acid sequence, 657 residues long: Wall-associated receptor kinase-like 20 (657 aa).

Positions 1–23 (MEKKRSYYALLIPTLLTVWLACA) are cleaved as a signal peptide. At 24-293 (GHSCARHAKA…KHCKKKKKTV (270 aa)) the chain is on the extracellular side. An N-linked (GlcNAc...) asparagine glycan is attached at asparagine 140. A helical membrane pass occupies residues 294–314 (VFAGAAVAVVGVTLAIAVAVI). The Cytoplasmic segment spans residues 315 to 657 (GTKHSHQKVK…NILSQEVTET (343 aa)). The 284-residue stretch at 363–646 (FSKDNLIGTG…KEVADEIEYI (284 aa)) folds into the Protein kinase domain. ATP contacts are provided by residues 369–377 (IGTGGFGEV) and lysine 391. The active-site Proton acceptor is aspartate 490.

The protein belongs to the protein kinase superfamily. Ser/Thr protein kinase family.

Its subcellular location is the membrane. It catalyses the reaction L-seryl-[protein] + ATP = O-phospho-L-seryl-[protein] + ADP + H(+). The enzyme catalyses L-threonyl-[protein] + ATP = O-phospho-L-threonyl-[protein] + ADP + H(+). Serine/threonine-protein kinase that may function as a signaling receptor of extracellular matrix component. The protein is Wall-associated receptor kinase-like 20 (WAKL20) of Arabidopsis thaliana (Mouse-ear cress).